A 448-amino-acid polypeptide reads, in one-letter code: Proline iminopeptidase aneH (448 aa).

The AB hydrolase-1 domain occupies 64–191 (PWMLYLQGGP…VEVFIGGGPC (128 aa)). The Nucleophile role is filled by serine 164. The active site involves aspartate 397. Histidine 425 (proton donor) is an active-site residue.

This sequence belongs to the peptidase S33 family. Homooligomer.

Its subcellular location is the cytoplasm. The enzyme catalyses Release of N-terminal proline from a peptide.. The protein operates within secondary metabolite biosynthesis. Its function is as follows. Proline iminopeptidase; part of the gene cluster that mediates the biosynthesis of aculenes, a unique type of norsesquiterpenes that contain a nordaucane skeleton linked to an L-proline moiety and are of mixed biosynthetic origin. The pathway begins with the synthesis of dauca-4,7-diene by the terpene cyclase aneC using farnesyl pyrophosphate (FPP) as substrate. The cytochrome P450 monooxygenase aneF then performs the initial oxidation at C-12 of dauca-4,7-diene to yield asperaculane D. Asperaculane D is substrate of the cytochrome P450 monooxygenase aneD for C-10 hydroxylation to yield asperaculane E. The cytochrome P450 monooxygenase aneG then converts asperaculane E into aculene D via C-2 oxidation. The monomodular nonribosomal peptide synthtase aneB adenylates L-proline and the thiohydrolase aneE transfers this activated L-proline derivative to aculenes D and C to produce respectively aculenes B and A. The dioxygenase aneA converts aculene D into aculene C, and aculene B into aculene A by introducing the 5,6-alkene moiety. Asperculanes A, B, C and F, as well as 14-prolyl asperculane C, might be shunt products of the pathway. The sequence is that of Proline iminopeptidase aneH from Aspergillus aculeatus (strain ATCC 16872 / CBS 172.66 / WB 5094).